Reading from the N-terminus, the 279-residue chain is Bifunctional protein FolD 1 (279 aa).

Residues 166 to 168 (GRS) and Ser-191 contribute to the NADP(+) site.

Belongs to the tetrahydrofolate dehydrogenase/cyclohydrolase family. As to quaternary structure, homodimer.

The catalysed reaction is (6R)-5,10-methylene-5,6,7,8-tetrahydrofolate + NADP(+) = (6R)-5,10-methenyltetrahydrofolate + NADPH. The enzyme catalyses (6R)-5,10-methenyltetrahydrofolate + H2O = (6R)-10-formyltetrahydrofolate + H(+). Its pathway is one-carbon metabolism; tetrahydrofolate interconversion. Functionally, catalyzes the oxidation of 5,10-methylenetetrahydrofolate to 5,10-methenyltetrahydrofolate and then the hydrolysis of 5,10-methenyltetrahydrofolate to 10-formyltetrahydrofolate. The protein is Bifunctional protein FolD 1 of Salinispora arenicola (strain CNS-205).